Consider the following 284-residue polypeptide: Hydrogenase expression/formation protein HupQ (284 aa).

The disordered stretch occupies residues 1-23; sequence MIGTQSILPPGFGPGSHGEEDRL.

The protein belongs to the HupH/HyaF family.

The protein is Hydrogenase expression/formation protein HupQ (hupQ) of Azotobacter chroococcum mcd 1.